Consider the following 580-residue polypeptide: G1/S-specific cyclin CLN3 (580 aa).

Residues 454–469 (FTPTSSSSSPSPFNSP) are compositionally biased toward low complexity. 2 disordered regions span residues 454 to 498 (FTPT…QNSF) and 546 to 580 (MATAHPCSAPTQLKKRSTSSVDCDFNDSSNLKKTR). Polar residues-rich tracts occupy residues 470–480 (YKTSSSMTTPD) and 563–580 (TSSVDCDFNDSSNLKKTR).

Belongs to the cyclin family.

Functionally, essential for the control of the cell cycle at the G1/S (start) transition. CLN3 may be an upstream activator of the G1 cyclins which directly catalyze start. The protein is G1/S-specific cyclin CLN3 (CLN3) of Saccharomyces cerevisiae (strain ATCC 204508 / S288c) (Baker's yeast).